A 209-amino-acid polypeptide reads, in one-letter code: FMN-dependent NADH:quinone oxidoreductase (209 aa).

Residues Ser18, 102–105 (MYNF), and 146–149 (SRGG) each bind FMN.

This sequence belongs to the azoreductase type 1 family. Homodimer. FMN serves as cofactor.

It catalyses the reaction 2 a quinone + NADH + H(+) = 2 a 1,4-benzosemiquinone + NAD(+). It carries out the reaction N,N-dimethyl-1,4-phenylenediamine + anthranilate + 2 NAD(+) = 2-(4-dimethylaminophenyl)diazenylbenzoate + 2 NADH + 2 H(+). Quinone reductase that provides resistance to thiol-specific stress caused by electrophilic quinones. In terms of biological role, also exhibits azoreductase activity. Catalyzes the reductive cleavage of the azo bond in aromatic azo compounds to the corresponding amines. This chain is FMN-dependent NADH:quinone oxidoreductase, found in Saccharophagus degradans (strain 2-40 / ATCC 43961 / DSM 17024).